We begin with the raw amino-acid sequence, 259 residues long: Phosphate import ATP-binding protein PstB (259 aa).

The ABC transporter domain occupies 10–254 (AESRNLSFYY…PSRKETEDYI (245 aa)). ATP is bound at residue 43 to 50 (GPSGCGKS).

This sequence belongs to the ABC transporter superfamily. Phosphate importer (TC 3.A.1.7) family. In terms of assembly, the complex is composed of two ATP-binding proteins (PstB), two transmembrane proteins (PstC and PstA) and a solute-binding protein (PstS).

The protein localises to the cell inner membrane. The enzyme catalyses phosphate(out) + ATP + H2O = ADP + 2 phosphate(in) + H(+). In terms of biological role, part of the ABC transporter complex PstSACB involved in phosphate import. Responsible for energy coupling to the transport system. The protein is Phosphate import ATP-binding protein PstB of Methylobacillus flagellatus (strain ATCC 51484 / DSM 6875 / VKM B-1610 / KT).